The chain runs to 99 residues: UPF0751 protein BCE_A0020 (99 aa).

The protein belongs to the UPF0751 family.

In Bacillus cereus (strain ATCC 10987 / NRS 248), this protein is UPF0751 protein BCE_A0020.